Here is a 228-residue protein sequence, read N- to C-terminus: 2,3-bisphosphoglycerate-dependent phosphoglycerate mutase (228 aa).

Residues 8–15 (RHGQSVWN), 21–22 (SG), arginine 58, 111–114 (ERMY), lysine 122, 138–139 (RR), and 182–183 (GN) each bind substrate. Histidine 9 functions as the Tele-phosphohistidine intermediate in the catalytic mechanism. The Proton donor/acceptor role is filled by glutamate 111.

The protein belongs to the phosphoglycerate mutase family. BPG-dependent PGAM subfamily.

It carries out the reaction (2R)-2-phosphoglycerate = (2R)-3-phosphoglycerate. Its pathway is carbohydrate degradation; glycolysis; pyruvate from D-glyceraldehyde 3-phosphate: step 3/5. Its function is as follows. Catalyzes the interconversion of 2-phosphoglycerate and 3-phosphoglycerate. The protein is 2,3-bisphosphoglycerate-dependent phosphoglycerate mutase of Chlamydia pneumoniae (Chlamydophila pneumoniae).